The following is a 642-amino-acid chain: Threonine--tRNA ligase (642 aa).

The region spanning 1–61 (MPVITITNGL…MQDSKLDIIT (61 aa)) is the TGS domain. Residues 243 to 534 (DHRKIGQQLD…LIEEYAGFFP (292 aa)) are catalytic. 3 residues coordinate Zn(2+): C334, H385, and H511.

Belongs to the class-II aminoacyl-tRNA synthetase family. Homodimer. Requires Zn(2+) as cofactor.

It localises to the cytoplasm. The catalysed reaction is tRNA(Thr) + L-threonine + ATP = L-threonyl-tRNA(Thr) + AMP + diphosphate + H(+). Functionally, catalyzes the attachment of threonine to tRNA(Thr) in a two-step reaction: L-threonine is first activated by ATP to form Thr-AMP and then transferred to the acceptor end of tRNA(Thr). Also edits incorrectly charged L-seryl-tRNA(Thr). This chain is Threonine--tRNA ligase, found in Baumannia cicadellinicola subsp. Homalodisca coagulata.